We begin with the raw amino-acid sequence, 185 residues long: Transcription termination/antitermination protein NusG (185 aa).

A KOW domain is found at 134–164 (VGKRVRIVDGAFSGFEAPITEINGDKLTLTV).

This sequence belongs to the NusG family.

Functionally, participates in transcription elongation, termination and antitermination. This is Transcription termination/antitermination protein NusG from Lactococcus lactis subsp. lactis (strain IL1403) (Streptococcus lactis).